Here is a 452-residue protein sequence, read N- to C-terminus: UDP-N-acetylmuramoylalanine--D-glutamate ligase (452 aa).

Residue 113 to 119 (GTNGKTT) coordinates ATP.

Belongs to the MurCDEF family.

It localises to the cytoplasm. The catalysed reaction is UDP-N-acetyl-alpha-D-muramoyl-L-alanine + D-glutamate + ATP = UDP-N-acetyl-alpha-D-muramoyl-L-alanyl-D-glutamate + ADP + phosphate + H(+). It functions in the pathway cell wall biogenesis; peptidoglycan biosynthesis. In terms of biological role, cell wall formation. Catalyzes the addition of glutamate to the nucleotide precursor UDP-N-acetylmuramoyl-L-alanine (UMA). This is UDP-N-acetylmuramoylalanine--D-glutamate ligase (murD) from Synechocystis sp. (strain ATCC 27184 / PCC 6803 / Kazusa).